The chain runs to 293 residues: 4-hydroxy-tetrahydrodipicolinate synthase (293 aa).

Ser-45 serves as a coordination point for pyruvate. The Proton donor/acceptor role is filled by Tyr-133. The active-site Schiff-base intermediate with substrate is the Lys-161. Ile-203 provides a ligand contact to pyruvate.

Belongs to the DapA family. In terms of assembly, homotetramer; dimer of dimers.

Its subcellular location is the cytoplasm. The enzyme catalyses L-aspartate 4-semialdehyde + pyruvate = (2S,4S)-4-hydroxy-2,3,4,5-tetrahydrodipicolinate + H2O + H(+). It participates in amino-acid biosynthesis; L-lysine biosynthesis via DAP pathway; (S)-tetrahydrodipicolinate from L-aspartate: step 3/4. Catalyzes the condensation of (S)-aspartate-beta-semialdehyde [(S)-ASA] and pyruvate to 4-hydroxy-tetrahydrodipicolinate (HTPA). The polypeptide is 4-hydroxy-tetrahydrodipicolinate synthase (Psychromonas ingrahamii (strain DSM 17664 / CCUG 51855 / 37)).